The primary structure comprises 479 residues: Protein kinase 2 (479 aa).

A disordered region spans residues 1 to 136 (MGKGQSKIKN…NGNDDEDEGP (136 aa)). 2 stretches are compositionally biased toward low complexity: residues 52–65 (AQQQ…TTAA) and 79–96 (IPAP…TPTI). The span at 102–115 (NTDNNNINGASNEA) shows a compositional bias: polar residues. In terms of domain architecture, Protein kinase spans 153-407 (FELLNVIGKG…GGEVKQHPWF (255 aa)). Residues 159 to 167 (IGKGSFGKV) and lysine 182 each bind ATP. The Proton acceptor role is filled by aspartate 276. At threonine 309 the chain carries Phosphothreonine; by autocatalysis. The 72-residue stretch at 408–479 (KNIDWEKLDR…TYVADSILKD (72 aa)) folds into the AGC-kinase C-terminal domain. Threonine 470 is subject to Phosphothreonine.

It belongs to the protein kinase superfamily. AGC Ser/Thr protein kinase family. S6 kinase subfamily. In terms of processing, seems to be myristoylated.

It is found in the cytoplasm. The protein localises to the cell membrane. It catalyses the reaction L-seryl-[protein] + ATP = O-phospho-L-seryl-[protein] + ADP + H(+). The enzyme catalyses L-threonyl-[protein] + ATP = O-phospho-L-threonyl-[protein] + ADP + H(+). Functionally, required for morphogenesis during multicellular development. Phosphorylates talB, gefN, gefS, PI4P 5-kinase and gacQ. This Dictyostelium discoideum (Social amoeba) protein is Protein kinase 2 (pkgB).